We begin with the raw amino-acid sequence, 213 residues long: MDRSAQRIDFTQPADVVAPLLLGAVLRHGGVAIELTEVEAYLGTADEASHAFNGPTPRCEVMFGPPQHLYVYASYGIHRAGNLVCSPDGEAGGVLLRAGKIIEGLDIARARRGSKPADEALARGPGNLGAALGLNLDLNGSAVDQVFSGAGDSSPTSAPFTLTPRTAIPEITRGKRIGISKNADALLRFWVPGDRSVSSPRGRQLGTPLRASS.

This sequence belongs to the DNA glycosylase MPG family.

In Corynebacterium jeikeium (strain K411), this protein is Putative 3-methyladenine DNA glycosylase.